The chain runs to 214 residues: Thymidylate kinase (214 aa).

10–17 (GGEGAGKS) serves as a coordination point for ATP.

This sequence belongs to the thymidylate kinase family.

The catalysed reaction is dTMP + ATP = dTDP + ADP. Phosphorylation of dTMP to form dTDP in both de novo and salvage pathways of dTTP synthesis. In Brucella canis (strain ATCC 23365 / NCTC 10854 / RM-666), this protein is Thymidylate kinase.